A 519-amino-acid polypeptide reads, in one-letter code: General transcription factor 3C polypeptide 5 (519 aa).

At Ala-2 the chain carries N-acetylalanine. Residues 465–519 (ALFSSSAKADGGKEQLTYESGEDEEDEEEEEEEEEDFKPSDGSENEMETEILDYV) are disordered. Composition is skewed to acidic residues over residues 484–500 (SGED…EEED) and 507–519 (SENE…LDYV).

The protein belongs to the TFIIIC subunit 5 family. Part of the TFIIIC subcomplex TFIIIC2, consisting of six subunits, GTF3C1, GTF3C2, GTF3C3, GTF3C4, GTF3C5 and GTF3C6. Interacts with BRF1, GTF3C6 and TBP.

The protein resides in the nucleus. In terms of biological role, involved in RNA polymerase III-mediated transcription. Integral, tightly associated component of the DNA-binding TFIIIC2 subcomplex that directly binds tRNA and virus-associated RNA promoters. In Homo sapiens (Human), this protein is General transcription factor 3C polypeptide 5 (GTF3C5).